Here is a 339-residue protein sequence, read N- to C-terminus: 3-isopropylmalate dehydrogenase (339 aa).

Arginine 88, arginine 98, arginine 122, and aspartate 212 together coordinate substrate. 3 residues coordinate Mg(2+): aspartate 212, aspartate 236, and aspartate 240. Residue 272 to 284 (GSAPDIAGQGIAD) coordinates NAD(+).

The protein belongs to the isocitrate and isopropylmalate dehydrogenases family. LeuB type 2 subfamily. Homodimer. It depends on Mg(2+) as a cofactor. Mn(2+) is required as a cofactor.

The protein localises to the cytoplasm. It carries out the reaction (2R,3S)-3-isopropylmalate + NAD(+) = 4-methyl-2-oxopentanoate + CO2 + NADH. Its pathway is amino-acid biosynthesis; L-leucine biosynthesis; L-leucine from 3-methyl-2-oxobutanoate: step 3/4. Catalyzes the oxidation of 3-carboxy-2-hydroxy-4-methylpentanoate (3-isopropylmalate) to 3-carboxy-4-methyl-2-oxopentanoate. The product decarboxylates to 4-methyl-2 oxopentanoate. The chain is 3-isopropylmalate dehydrogenase from Corynebacterium diphtheriae (strain ATCC 700971 / NCTC 13129 / Biotype gravis).